A 216-amino-acid polypeptide reads, in one-letter code: Adenylate kinase (216 aa).

An ATP-binding site is contributed by 10 to 15 (GAGKGT). Positions 30-59 (STGDIFRKNISENTPLGIEAKSYMDNGQLV) are NMP. Residues Thr31, Arg36, 57 to 59 (QLV), 85 to 88 (GFPR), and Gln92 contribute to the AMP site. The LID stretch occupies residues 126 to 163 (GRRVCPSCGASYHIKFNPPTNDGKCDLCGSDVIQRKDD). Arg127 serves as a coordination point for ATP. The Zn(2+) site is built by Cys130 and Cys133. Residue 136–137 (SY) coordinates ATP. Residues Cys150 and Cys153 each coordinate Zn(2+). Arg160 and Arg171 together coordinate AMP. Gln199 contributes to the ATP binding site.

It belongs to the adenylate kinase family. As to quaternary structure, monomer.

The protein localises to the cytoplasm. The enzyme catalyses AMP + ATP = 2 ADP. The protein operates within purine metabolism; AMP biosynthesis via salvage pathway; AMP from ADP: step 1/1. Functionally, catalyzes the reversible transfer of the terminal phosphate group between ATP and AMP. Plays an important role in cellular energy homeostasis and in adenine nucleotide metabolism. This chain is Adenylate kinase, found in Clostridium perfringens (strain ATCC 13124 / DSM 756 / JCM 1290 / NCIMB 6125 / NCTC 8237 / Type A).